A 108-amino-acid chain; its full sequence is Protein FMC1 homolog (108 aa).

Belongs to the FMC1 family.

In Caenorhabditis elegans, this protein is Protein FMC1 homolog.